The following is a 340-amino-acid chain: DnaJ homolog subfamily C member 22 (340 aa).

Residues 1-50 (MGKSLLAAYGLWALGGPLGLYHIYLGRDSHALLWMLTLGGFGMGWMWDFW) form the TM2 domain. 7 consecutive transmembrane segments (helical) span residues 5 to 25 (LLAA…HIYL), 30 to 50 (HALL…WDFW), 81 to 101 (FIGQ…GLSF), 105 to 125 (FHMV…ATVG), 135 to 155 (LIAA…MIPI), 186 to 206 (IGLV…LNTS), and 212 to 232 (VAGS…ISAL). In terms of domain architecture, J spans 278-340 (MACKVLGVNF…LMRLRKSKTL (63 aa)).

The protein resides in the membrane. In terms of biological role, may function as a co-chaperone. This is DnaJ homolog subfamily C member 22 (dnajc22) from Xenopus tropicalis (Western clawed frog).